A 410-amino-acid chain; its full sequence is Alanine racemase (410 aa).

The RPE1 insert domain maps to 28 to 76 (VDFLHNVANKEEFAGNTSPRTAAYTLVREDASLGSTPKLPLGASYAKNL). The active-site Proton acceptor; specific for D-alanine is Lys-83. N6-(pyridoxal phosphate)lysine is present on Lys-83. Position 182 (Arg-182) interacts with substrate. Tyr-305 (proton acceptor; specific for L-alanine) is an active-site residue. Met-353 contacts substrate.

Belongs to the alanine racemase family. It depends on pyridoxal 5'-phosphate as a cofactor.

The catalysed reaction is L-alanine = D-alanine. Its pathway is amino-acid biosynthesis; D-alanine biosynthesis; D-alanine from L-alanine: step 1/1. Catalyzes the interconversion of L-alanine and D-alanine. May also act on other amino acids. The sequence is that of Alanine racemase (alr) from Rickettsia bellii (strain RML369-C).